Consider the following 114-residue polypeptide: Cuticle protein AMP5 (114 aa).

Position 1 is a pyrrolidone carboxylic acid (Gln1). The Chitin-binding type R&amp;R domain occupies 18–83 (AGNYFYEFET…VDSPLIPVAP (66 aa)).

As to expression, arthrodial membrane.

The protein is Cuticle protein AMP5 of Homarus americanus (American lobster).